The following is an 82-amino-acid chain: MDKQRIFEVLITNICEVLPELDGHRFEPEDQLVELGADSVDRAEIITMVLEDLSLKIPRIELSGVKNIGELAEVLYDKVQSA.

Residues 4 to 79 enclose the Carrier domain; it reads QRIFEVLITN…ELAEVLYDKV (76 aa). Ser-39 is modified (O-(pantetheine 4'-phosphoryl)serine).

Post-translationally, 4'-phosphopantetheine is transferred from CoA to a specific serine of apo-ACP by sfp.

It localises to the cytoplasm. The protein operates within antibiotic biosynthesis; bacillaene biosynthesis. Its function is as follows. Involved in some intermediate steps for the synthesis of the antibiotic polyketide bacillaene which is involved in secondary metabolism. The protein is Polyketide biosynthesis acyl-carrier-protein AcpK (acpK) of Bacillus subtilis (strain 168).